The chain runs to 203 residues: GTP cyclohydrolase-2 (203 aa).

A GTP-binding site is contributed by 49–53 (RIHSE). The Zn(2+) site is built by cysteine 54, cysteine 65, and cysteine 67. Residues glutamine 70, 92 to 94 (EGR), and threonine 114 contribute to the GTP site. Aspartate 126 functions as the Proton acceptor in the catalytic mechanism. Catalysis depends on arginine 128, which acts as the Nucleophile. 2 residues coordinate GTP: threonine 149 and lysine 154.

It belongs to the GTP cyclohydrolase II family. Zn(2+) is required as a cofactor.

It carries out the reaction GTP + 4 H2O = 2,5-diamino-6-hydroxy-4-(5-phosphoribosylamino)-pyrimidine + formate + 2 phosphate + 3 H(+). Its pathway is cofactor biosynthesis; riboflavin biosynthesis; 5-amino-6-(D-ribitylamino)uracil from GTP: step 1/4. Its function is as follows. Catalyzes the conversion of GTP to 2,5-diamino-6-ribosylamino-4(3H)-pyrimidinone 5'-phosphate (DARP), formate and pyrophosphate. The chain is GTP cyclohydrolase-2 from Shewanella oneidensis (strain ATCC 700550 / JCM 31522 / CIP 106686 / LMG 19005 / NCIMB 14063 / MR-1).